The primary structure comprises 317 residues: MWFYLVTLVGLYYLLRWYRERQVVSHLHDKYVFITGCDSGFGNLLARQLDRRGMRVLAACLTEKGAEELKSKTSDRLETVILDVTNTDSISAATQWVKEHVGDKGLWGLVNNAGVFQAFAYIEWCRPEDCMSIFQVNLIGLAQVTLSMLFLVKKARGRIVNVSSVLGRVALFGGFYSCSKYGVEAFSDVLRREIRDFGVKVSIIEPGSFKTRMTDAELIIEKTKKTWEATPEHIRESYGQQFFDDFCNTTRRELKKCSTNLSLVTDCMEHALTSKYPRTRYSAGWDARLFFIPLSYLPTSLVDCLLAISRRKPAQAV.

The signal sequence occupies residues Met1 to Trp17. Phe33 to Leu57 serves as a coordination point for NAD(+). The N-linked (GlcNAc...) asparagine glycan is linked to Asn161. Ser164 provides a ligand contact to substrate. Residue Tyr176 is the Proton acceptor of the active site.

Belongs to the short-chain dehydrogenases/reductases (SDR) family. In terms of tissue distribution, detected in prostate, liver and kidney.

Its subcellular location is the microsome membrane. It is found in the endoplasmic reticulum membrane. It catalyses the reaction all-trans-retinol--[retinol-binding protein] + NAD(+) = all-trans-retinal--[retinol-binding protein] + NADH + H(+). It carries out the reaction all-trans-retinol + NAD(+) = all-trans-retinal + NADH + H(+). The catalysed reaction is androsterone + NAD(+) = 5alpha-androstan-3,17-dione + NADH + H(+). The enzyme catalyses testosterone + NAD(+) = androst-4-ene-3,17-dione + NADH + H(+). It catalyses the reaction 5alpha-androstane-3alpha,17beta-diol + NAD(+) = 17beta-hydroxy-5alpha-androstan-3-one + NADH + H(+). It carries out the reaction 17beta-estradiol + NAD(+) = estrone + NADH + H(+). The catalysed reaction is 17beta-estradiol + NADP(+) = estrone + NADPH + H(+). The enzyme catalyses 3alpha-hydroxy-5alpha-pregnan-20-one + NAD(+) = 5alpha-pregnane-3,20-dione + NADH + H(+). It catalyses the reaction 5alpha-androstane-3beta,17beta-diol + NAD(+) = 17beta-hydroxy-5alpha-androstan-3-one + NADH + H(+). It carries out the reaction 3beta-hydroxy-5alpha-androstan-17-one + NAD(+) = 5alpha-androstan-3,17-dione + NADH + H(+). Competitively inhibited by 9-cis-retinoic acid and 13-cis-retinoic acid. Functionally, NAD-dependent oxidoreductase with broad substrate specificity that shows both oxidative and reductive activity (in vitro). Has retinol dehydrogenase activity towards all-trans-retinol (in vitro). Has 17-beta-hydroxysteroid dehydrogenase activity towards various steroids (in vitro). Converts 5-alpha-androstan-3-alpha,17-beta-diol to androsterone and estradiol to estrone (in vitro). Has 3-alpha-hydroxysteroid dehydrogenase activity towards androsterone (in vitro). This Rattus norvegicus (Rat) protein is 17-beta-hydroxysteroid dehydrogenase type 6 (Hsd17b6).